The following is a 705-amino-acid chain: Crooked neck-like protein 1 (705 aa).

HAT repeat units follow at residues 55–87, 89–121, 123–155, 157–188, 190–221, 223–258, 260–294, 304–336, 338–372, 382–418, 420–451, 453–485, 487–521, and 523–554; these read DYRL…WEES, KDLT…MEMK, KNIN…MEDM, GNYP…FEQR, KLFE…FEER, GNIE…FEEK, KEIE…FEKQ, VVLG…MEEI, GEIE…LWIN, KDME…FEIR, LNLD…LEIE, GNFD…LETE, GETV…SEIQ, and KQFD…FVHS. Positions 559-591 are disordered; sequence QQQKQRQQQQEEDGDSNTTKKDGGDDDNNDDIN. One copy of the HAT 15 repeat lies at 597–629; it reads IFIEAHKSLSNSDKEERLLLLESWKEFEQTFGN.

Belongs to the crooked-neck family. As to quaternary structure, identified in the spliceosome C complex.

Its subcellular location is the nucleus. The protein resides in the nucleus speckle. Its function is as follows. Involved in pre-mRNA splicing process. This Dictyostelium discoideum (Social amoeba) protein is Crooked neck-like protein 1 (crnkl1).